Consider the following 224-residue polypeptide: MEAYKKEFIEFMIECGVLTFGDFVTKSGRNTPFFVNTGNYKTGSQLKRLGEYYAEAIKANYKDDYNIVFGPAYKGIPLSVTVTMALSDKYGIDVSYCSNRKEIKDHGDTGILLGSKLNDGDKVLIVEDVTTSGKSIYETMPIIKEQGNVDVVGLVISVNRMEKGQGEKSALVELEEKYGFKSCAIVTMTEVVKYLYNKEVNGKVIINDEVKTRIDEYYKEYGAK.

Residues lysine 26, 73–74, arginine 100, lysine 101, lysine 104, histidine 106, and 127–135 each bind 5-phospho-alpha-D-ribose 1-diphosphate; these read YK and EDVTTSGKS. 2 residues coordinate orotate: threonine 131 and arginine 160.

The protein belongs to the purine/pyrimidine phosphoribosyltransferase family. PyrE subfamily. As to quaternary structure, homodimer. It depends on Mg(2+) as a cofactor.

The catalysed reaction is orotidine 5'-phosphate + diphosphate = orotate + 5-phospho-alpha-D-ribose 1-diphosphate. The protein operates within pyrimidine metabolism; UMP biosynthesis via de novo pathway; UMP from orotate: step 1/2. Functionally, catalyzes the transfer of a ribosyl phosphate group from 5-phosphoribose 1-diphosphate to orotate, leading to the formation of orotidine monophosphate (OMP). The polypeptide is Orotate phosphoribosyltransferase (Clostridium botulinum (strain Eklund 17B / Type B)).